A 514-amino-acid polypeptide reads, in one-letter code: 6-phosphofructo-2-kinase/fructose-2,6-bisphosphatase 3 (514 aa).

The interval 1–245 (MPLELTQSRV…VYYLMNIHVQ (245 aa)) is 6-phosphofructo-2-kinase. ATP is bound at residue 42 to 50 (GLPARGKTY). Beta-D-fructose 6-phosphate-binding residues include Arg75 and Arg99. Asp125 is a catalytic residue. Beta-D-fructose 6-phosphate is bound by residues Thr127 and Arg133. Cys155 is an active-site residue. 164–169 (NIMEVK) contacts ATP. Residues Lys169, Arg190, and Tyr194 each coordinate beta-D-fructose 6-phosphate. The interval 246 to 514 (PRTIYLCRHG…QPLLGQACLT (269 aa)) is fructose-2,6-bisphosphatase. Arg253 contacts beta-D-fructose 2,6-bisphosphate. His254 serves as the catalytic Tele-phosphohistidine intermediate. Beta-D-fructose 2,6-bisphosphate is bound by residues Asn260 and Gly266. Glu323 acts as the Proton donor/acceptor in catalysis. Beta-D-fructose 2,6-bisphosphate contacts are provided by Tyr334, Arg348, Lys352, Tyr363, Gln389, and Arg393. Position 345-348 (345-348 (YALR)) interacts with ATP. ATP-binding positions include 389–393 (QAVLR) and Tyr425. The segment at 444–475 (ERSEDAKKGPNPLMRRNSVTPLASPEPTKKPR) is disordered. At Ser461 the chain carries Phosphoserine; by AMPK and PKA. Thr463 bears the Phosphothreonine mark. At Ser467 the chain carries Phosphoserine. Thr471 carries the phosphothreonine; by PKC modification.

This sequence in the C-terminal section; belongs to the phosphoglycerate mutase family. In terms of assembly, homodimer. Forms a heterodimer with PFKFB2. In terms of processing, phosphorylation by AMPK stimulates activity.

The catalysed reaction is beta-D-fructose 2,6-bisphosphate + H2O = beta-D-fructose 6-phosphate + phosphate. The enzyme catalyses beta-D-fructose 6-phosphate + ATP = beta-D-fructose 2,6-bisphosphate + ADP + H(+). In terms of biological role, catalyzes both the synthesis and degradation of fructose 2,6-bisphosphate. The chain is 6-phosphofructo-2-kinase/fructose-2,6-bisphosphatase 3 (PFKFB3) from Pongo abelii (Sumatran orangutan).